The sequence spans 430 residues: Carbamoyl phosphate synthase arginine-specific small chain (430 aa).

A mitochondrion-targeting transit peptide spans 1 to 9 (MLSATKRYL). In terms of domain architecture, Glutamine amidotransferase type-1 spans 219–407 (HIAVLDCGAK…FDNINVYKKS (189 aa)). Cysteine 296 acts as the Nucleophile in catalysis. Active-site residues include histidine 380 and glutamate 382.

It belongs to the CarA family. As to quaternary structure, heterodimer composed of 2 chains; the small (or glutamine) chain promotes the hydrolysis of glutamine to ammonia, which is used by the large (or ammonia) chain to synthesize carbamoyl phosphate.

Its subcellular location is the mitochondrion matrix. It carries out the reaction hydrogencarbonate + L-glutamine + 2 ATP + H2O = carbamoyl phosphate + L-glutamate + 2 ADP + phosphate + 2 H(+). It catalyses the reaction L-glutamine + H2O = L-glutamate + NH4(+). The protein operates within amino-acid biosynthesis; L-arginine biosynthesis; carbamoyl phosphate from bicarbonate: step 1/1. In terms of biological role, small subunit of the arginine-specific carbamoyl phosphate synthase (CPSase). CPSase catalyzes the formation of carbamoyl phosphate from the ammonia moiety of glutamine, carbonate, and phosphate donated by ATP, the first step of the arginine biosynthetic pathway. The small subunit (glutamine amidotransferase) binds and cleaves glutamine to supply the large subunit with the substrate ammonia. This chain is Carbamoyl phosphate synthase arginine-specific small chain (CPA1), found in Candida albicans (strain SC5314 / ATCC MYA-2876) (Yeast).